A 201-amino-acid chain; its full sequence is Putative 3-methyladenine DNA glycosylase (201 aa).

It belongs to the DNA glycosylase MPG family.

The protein is Putative 3-methyladenine DNA glycosylase of Trichodesmium erythraeum (strain IMS101).